Consider the following 159-residue polypeptide: Nascent polypeptide-associated complex subunit beta (159 aa).

Disordered stretches follow at residues 1–39 and 124–159; these read MDMEKLKRMQARGGVRTGDGKGTPRRKVKNVHKSTGMDD and QSMQKAEGGEEKKDDEEDDDDIPDLVEGENFEDKVE. Positions 23-32 are enriched in basic residues; it reads TPRRKVKNVH. The 66-residue stretch at 36–101 folds into the NAC-A/B domain; the sequence is GMDDKKLQTS…GEDKELTELV (66 aa). Residues 136–153 are compositionally biased toward acidic residues; it reads KDDEEDDDDIPDLVEGEN.

It belongs to the NAC-beta family. In terms of assembly, part of the nascent polypeptide-associated complex (NAC), consisting of EGD2 and EGD1. NAC associates with ribosomes via EGD1.

It is found in the cytoplasm. The protein resides in the nucleus. Functionally, component of the nascent polypeptide-associated complex (NAC), a dynamic component of the ribosomal exit tunnel, protecting the emerging polypeptides from interaction with other cytoplasmic proteins to ensure appropriate nascent protein targeting. The NAC complex also promotes mitochondrial protein import by enhancing productive ribosome interactions with the outer mitochondrial membrane and blocks the inappropriate interaction of ribosomes translating non-secretory nascent polypeptides with translocation sites in the membrane of the endoplasmic reticulum. EGD1 may act as a transcription factor that exert a negative effect on the expression of several genes that are transcribed by RNA polymerase II. This is Nascent polypeptide-associated complex subunit beta (egd1) from Sclerotinia sclerotiorum (strain ATCC 18683 / 1980 / Ss-1) (White mold).